The chain runs to 511 residues: Probable dolichyl pyrophosphate Glc1Man9GlcNAc2 alpha-1,3-glucosyltransferase (511 aa).

11 helical membrane passes run 4–24, 94–112, 124–144, 151–171, 210–230, 300–320, 332–352, 356–370, 377–394, 432–452, and 469–491; these read LFWHLVGIATGLKILLIPAYH, VYFQRLSVIVTDLVYVLGV, DTQQFFAASMLLLLNVGLIFV, YNGLLFGILLLSIGSLIRQRF, VVSAVGAVVKLLVVGLTPFAV, PAITPPVTFALTALFMLPILV, LVFLRAVVLCGCSSFVFGWHV, AILMVLLPLCLLTLV, YAYVLGIAGYFSLFPLLF, WLYMLGFMAIPLYEHLLSFLL, and YSALGVLYFFGAYYLYALGISWG.

Belongs to the ALG6/ALG8 glucosyltransferase family.

It localises to the endoplasmic reticulum membrane. The catalysed reaction is an alpha-D-Glc-(1-&gt;3)-alpha-D-Man-(1-&gt;2)-alpha-D-Man-(1-&gt;2)-alpha-D-Man-(1-&gt;3)-[alpha-D-Man-(1-&gt;2)-alpha-D-Man-(1-&gt;3)-[alpha-D-Man-(1-&gt;2)-alpha-D-Man-(1-&gt;6)]-alpha-D-Man-(1-&gt;6)]-beta-D-Man-(1-&gt;4)-beta-D-GlcNAc-(1-&gt;4)-alpha-D-GlcNAc-diphospho-di-trans,poly-cis-dolichol + a di-trans,poly-cis-dolichyl beta-D-glucosyl phosphate = an alpha-D-Glc-(1-&gt;3)-alpha-D-Glc-(1-&gt;3)-alpha-D-Man-(1-&gt;2)-alpha-D-Man-(1-&gt;2)-alpha-D-Man-(1-&gt;3)-[alpha-D-Man-(1-&gt;2)-alpha-D-Man-(1-&gt;3)-[alpha-D-Man-(1-&gt;2)-alpha-D-Man-(1-&gt;6)]-alpha-D-Man-(1-&gt;6)]-beta-D-Man-(1-&gt;4)-beta-D-GlcNAc-(1-&gt;4)-alpha-D-GlcNAc-diphospho-di-trans,poly-cis-dolichol + a di-trans,poly-cis-dolichyl phosphate + H(+). It participates in protein modification; protein glycosylation. Its function is as follows. Adds the second glucose residue to the lipid-linked oligosaccharide precursor for N-linked glycosylation. Transfers glucose from dolichyl phosphate glucose (Dol-P-Glc) onto the lipid-linked oligosaccharide Glc(1)Man(9)GlcNAc(2)-PP-Dol. Functions in developmental processes such as germband extension, the apical constriction of mesoderm precursor cells and ventral furrow formation in early embryogenesis prior to gastrulation. Involved in the glycosylation and intracellular distribution of shg (E-cadherin). Function in cell intercalation in the lateral epidermis during germband extension may be due to its effect on shg. This Drosophila melanogaster (Fruit fly) protein is Probable dolichyl pyrophosphate Glc1Man9GlcNAc2 alpha-1,3-glucosyltransferase.